The sequence spans 257 residues: Hydroxyacylglutathione hydrolase (257 aa).

Positions 54, 56, 58, 59, 113, 137, and 175 each coordinate Zn(2+).

Belongs to the metallo-beta-lactamase superfamily. Glyoxalase II family. In terms of assembly, monomer. Zn(2+) serves as cofactor.

The enzyme catalyses an S-(2-hydroxyacyl)glutathione + H2O = a 2-hydroxy carboxylate + glutathione + H(+). The protein operates within secondary metabolite metabolism; methylglyoxal degradation; (R)-lactate from methylglyoxal: step 2/2. In terms of biological role, thiolesterase that catalyzes the hydrolysis of S-D-lactoyl-glutathione to form glutathione and D-lactic acid. The polypeptide is Hydroxyacylglutathione hydrolase (Nostoc punctiforme (strain ATCC 29133 / PCC 73102)).